The chain runs to 452 residues: Isocitrate dehydrogenase [NADP], mitochondrial (452 aa).

The transit peptide at Met1–Tyr39 directs the protein to the mitochondrion. An N6-acetyllysine mark is found at Lys45, Lys48, Lys67, and Lys69. Lys80 and Lys106 each carry N6-acetyllysine; alternate. N6-succinyllysine; alternate occurs at positions 80 and 106. Residues Thr115–Thr117 and Arg122 contribute to the NADP(+) site. Thr117 lines the D-threo-isocitrate pocket. Residues Ser134 to Arg140 and Arg149 each bind D-threo-isocitrate. Lys155 carries the post-translational modification N6-acetyllysine. Position 166 is an N6-acetyllysine; alternate (Lys166). The residue at position 166 (Lys166) is an N6-succinyllysine; alternate. Arg172 contributes to the D-threo-isocitrate binding site. N6-acetyllysine; alternate is present on residues Lys180 and Lys193. N6-succinyllysine; alternate is present on residues Lys180 and Lys193. Position 199 is an N6-acetyllysine (Lys199). Lys256 carries the N6-acetyllysine; alternate modification. Lys256 is modified (N6-succinyllysine; alternate). 4 positions are modified to N6-acetyllysine: Lys263, Lys272, Lys275, and Lys280. Lys282 bears the N6-acetyllysine; alternate mark. Lys282 is modified (N6-succinyllysine; alternate). Asp291 is a Mn(2+) binding site. Position 299 (Lys299) interacts with NADP(+). A Mn(2+)-binding site is contributed by Asp314. Residues Gly349–His354 and Asn367 contribute to the NADP(+) site. Lys384 carries the N6-acetyllysine; alternate modification. Residue Lys384 is modified to N6-succinyllysine; alternate. N6-acetyllysine is present on residues Lys400, Lys413, and Lys442.

The protein belongs to the isocitrate and isopropylmalate dehydrogenases family. Homodimer. Mg(2+) is required as a cofactor. Requires Mn(2+) as cofactor. Post-translationally, acetylation at Lys-413 dramatically reduces catalytic activity. Deacetylated by SIRT3.

It is found in the mitochondrion. The catalysed reaction is D-threo-isocitrate + NADP(+) = 2-oxoglutarate + CO2 + NADPH. Plays a role in intermediary metabolism and energy production. It may tightly associate or interact with the pyruvate dehydrogenase complex. The chain is Isocitrate dehydrogenase [NADP], mitochondrial (IDH2) from Bos taurus (Bovine).